A 375-amino-acid chain; its full sequence is UDP-N-acetylglucosamine--N-acetylmuramyl-(pentapeptide) pyrophosphoryl-undecaprenol N-acetylglucosamine transferase (375 aa).

UDP-N-acetyl-alpha-D-glucosamine contacts are provided by residues 13–15, Asn124, Arg165, Ser193, and Gln294; that span reads TGG.

Belongs to the glycosyltransferase 28 family. MurG subfamily.

Its subcellular location is the cell inner membrane. The catalysed reaction is di-trans,octa-cis-undecaprenyl diphospho-N-acetyl-alpha-D-muramoyl-L-alanyl-D-glutamyl-meso-2,6-diaminopimeloyl-D-alanyl-D-alanine + UDP-N-acetyl-alpha-D-glucosamine = di-trans,octa-cis-undecaprenyl diphospho-[N-acetyl-alpha-D-glucosaminyl-(1-&gt;4)]-N-acetyl-alpha-D-muramoyl-L-alanyl-D-glutamyl-meso-2,6-diaminopimeloyl-D-alanyl-D-alanine + UDP + H(+). It participates in cell wall biogenesis; peptidoglycan biosynthesis. In terms of biological role, cell wall formation. Catalyzes the transfer of a GlcNAc subunit on undecaprenyl-pyrophosphoryl-MurNAc-pentapeptide (lipid intermediate I) to form undecaprenyl-pyrophosphoryl-MurNAc-(pentapeptide)GlcNAc (lipid intermediate II). This chain is UDP-N-acetylglucosamine--N-acetylmuramyl-(pentapeptide) pyrophosphoryl-undecaprenol N-acetylglucosamine transferase, found in Brucella anthropi (strain ATCC 49188 / DSM 6882 / CCUG 24695 / JCM 21032 / LMG 3331 / NBRC 15819 / NCTC 12168 / Alc 37) (Ochrobactrum anthropi).